A 543-amino-acid chain; its full sequence is MSSFSYEPYYSTSYKRRYVETPRVHISSVRSGYSTARSAYSSYSAPVSSSLSVRRSYSSSSGSLMPSLENLDLSQVAAISNDLKSIRTQEKAQLQDLNDRFASFIERVHELEQQNKVLEAELLVLRQKHSEPSRFRALYEQEIRDLRLAAEDATNEKQALQGEREGLEETLRNLQARYEEEVLSREDAEGRLMEARKGADEAALARAELEKRIDSLMDEISFLKKVHEEEIAELQAQIQYAQISVEMDVTKPDLSAALKDIRAQYEKLAAKNMQNAEEWFKSRFTVLTESAAKNTDAVRAAKDEVSESRRLLKAKTLEIEACRGMNEALEKQLQELEDKQNADISAMQDTINKLENELRTTKSEMARYLKEYQDLLNVKMALDIEIAAYRKLLEGEETRLSFTSVGSITSGYSQSSQVFGRSAYGGLQTSSYLMSTRSFPSYYTSHVQEEQIEVEETIEAAKAEEAKDEPPSEGEAEEEEKDKEEAEEEEAAEEEEAAKEESEEAKEEEEGGEGEEGEETKEAEEEEKKVEGAGEEQAAKKKD.

Serine 2 carries the N-acetylserine modification. Residues 2–92 are head; it reads SSFSYEPYYS…LKSIRTQEKA (91 aa). Residue threonine 21 is glycosylated (O-linked (GlcNAc) threonine). An Asymmetric dimethylarginine; alternate modification is found at arginine 23. Position 23 is an omega-N-methylarginine; alternate (arginine 23). Serine 27 carries an O-linked (GlcNAc) serine glycan. Arginine 30 is modified (omega-N-methylarginine). The residue at position 43 (tyrosine 43) is a Phosphotyrosine. A phosphoserine mark is found at serine 56, serine 67, and serine 103. One can recognise an IF rod domain in the interval 90–400; the sequence is EKAQLQDLND…KLLEGEETRL (311 aa). Positions 93 to 124 are coil 1A; the sequence is QLQDLNDRFASFIERVHELEQQNKVLEAELLV. A linker 1 region spans residues 125 to 137; it reads LRQKHSEPSRFRA. Positions 138 to 234 are coil 1B; that stretch reads LYEQEIRDLR…KVHEEEIAEL (97 aa). The tract at residues 235–252 is linker 12; the sequence is QAQIQYAQISVEMDVTKP. A coil 2A region spans residues 253 to 271; sequence DLSAALKDIRAQYEKLAAK. The linker 2 stretch occupies residues 272–280; that stretch reads NMQNAEEWF. The coil 2B stretch occupies residues 281–396; the sequence is KSRFTVLTES…AAYRKLLEGE (116 aa). The epitope; recognized by IF-specific monoclonal antibody stretch occupies residues 381–391; it reads ALDIEIAAYRK. Positions 397 to 443 are tail, subdomain A; the sequence is ETRLSFTSVGSITSGYSQSSQVFGRSAYGGLQTSSYLMSTRSFPSYY. Residues 397–543 form a tail region; that stretch reads ETRLSFTSVG…GEEQAAKKKD (147 aa). The segment at 444–543 is tail, subdomain B (acidic); sequence TSHVQEEQIE…GEEQAAKKKD (100 aa). Residues 462-543 are disordered; the sequence is KAEEAKDEPP…GEEQAAKKKD (82 aa). Residues 471–525 are compositionally biased toward acidic residues; sequence PSEGEAEEEEKDKEEAEEEEAAEEEEAAKEESEEAKEEEEGGEGEEGEETKEAEE. Phosphoserine occurs at positions 472 and 502. The residue at position 520 (threonine 520) is a Phosphothreonine. Residues 526–543 are compositionally biased toward basic and acidic residues; that stretch reads EEKKVEGAGEEQAAKKKD.

This sequence belongs to the intermediate filament family. As to quaternary structure, forms homodimers (in vitro). Forms heterodimers with NEFH or NEFM; which can further hetero-oligomerize (in vitro). Forms heterodimers with INA (in vitro). Interacts with ARHGEF28. Interacts with TRIM2. Post-translationally, O-glycosylated. In terms of processing, phosphorylated in the head and rod regions by the PKC kinase PKN1, leading to the inhibition of polymerization. Ubiquitinated in the presence of TRIM2 and UBE2D1.

The protein resides in the cell projection. Its subcellular location is the axon. It localises to the cytoplasm. It is found in the cytoskeleton. Its function is as follows. Neurofilaments usually contain three intermediate filament proteins: NEFL, NEFM, and NEFH which are involved in the maintenance of neuronal caliber. May additionally cooperate with the neuronal intermediate filament proteins PRPH and INA to form neuronal filamentous networks. This is Neurofilament light polypeptide (NEFL) from Homo sapiens (Human).